The primary structure comprises 268 residues: Cyclohexadienyl dehydratase (268 aa).

Residues 1-25 form the signal peptide; the sequence is MPKSFRHLVQALACLALLASASLQA.

The protein belongs to the bacterial solute-binding protein 3 family. Homodimer.

The protein resides in the periplasm. The enzyme catalyses prephenate + H(+) = 3-phenylpyruvate + CO2 + H2O. The catalysed reaction is L-arogenate + H(+) = L-phenylalanine + CO2 + H2O. Its pathway is amino-acid biosynthesis; L-phenylalanine biosynthesis; L-phenylalanine from L-arogenate: step 1/1. It functions in the pathway amino-acid biosynthesis; L-phenylalanine biosynthesis; phenylpyruvate from prephenate: step 1/1. Functionally, forms alternative pathway for phenylalanine biosynthesis. Can catalyze two reactions: prephenate dehydratase and arogenate dehydratase. May have a role in chemotaxis or transport. This chain is Cyclohexadienyl dehydratase (pheC), found in Pseudomonas aeruginosa (strain ATCC 15692 / DSM 22644 / CIP 104116 / JCM 14847 / LMG 12228 / 1C / PRS 101 / PAO1).